Reading from the N-terminus, the 393-residue chain is L-rhamnonate dehydratase (393 aa).

Residues H22 and R48 each coordinate substrate. Residues D214, E241, and E269 each contribute to the Mg(2+) site. H319 functions as the Proton acceptor in the catalytic mechanism. A substrate-binding site is contributed by E339.

It belongs to the mandelate racemase/muconate lactonizing enzyme family. RhamD subfamily. Homooctamer; tetramer of dimers. Mg(2+) serves as cofactor.

It catalyses the reaction L-rhamnonate = 2-dehydro-3-deoxy-L-rhamnonate + H2O. Functionally, catalyzes the dehydration of L-rhamnonate to 2-keto-3-deoxy-L-rhamnonate (KDR). In Azorhizobium caulinodans (strain ATCC 43989 / DSM 5975 / JCM 20966 / LMG 6465 / NBRC 14845 / NCIMB 13405 / ORS 571), this protein is L-rhamnonate dehydratase.